An 89-amino-acid polypeptide reads, in one-letter code: Large ribosomal subunit protein bL27 (89 aa).

The segment at 1–21 (MAHKKSGGSSSNGRDSESKRL) is disordered.

The protein belongs to the bacterial ribosomal protein bL27 family.

The chain is Large ribosomal subunit protein bL27 from Caulobacter vibrioides (strain NA1000 / CB15N) (Caulobacter crescentus).